Here is a 51-residue protein sequence, read N- to C-terminus: MRDKIKLVSSAGTGHYYTTTKNKRTTPEKLEKKKYDPVVRKHVLYKEAKIK.

It belongs to the bacterial ribosomal protein bL33 family.

The sequence is that of Large ribosomal subunit protein bL33 from Nitrosococcus oceani (strain ATCC 19707 / BCRC 17464 / JCM 30415 / NCIMB 11848 / C-107).